Here is a 185-residue protein sequence, read N- to C-terminus: Signal peptidase I P (185 aa).

Residues 1 to 14 lie on the Cytoplasmic side of the membrane; the sequence is MFDKEKRKKSNIID. A helical transmembrane segment spans residues 15-34; that stretch reads WIKAILIALILVFLVRTFLF. Residues 35-185 are Extracellular-facing; sequence EPYIVQGESM…FPLDRIRHAK (151 aa). Active-site residues include Ser43 and Lys85.

It belongs to the peptidase S26 family.

It is found in the cell membrane. The enzyme catalyses Cleavage of hydrophobic, N-terminal signal or leader sequences from secreted and periplasmic proteins.. This is Signal peptidase I P (sipP) from Bacillus subtilis subsp. natto.